Here is a 320-residue protein sequence, read N- to C-terminus: Aminoacyl tRNA synthase complex-interacting multifunctional protein 2 (320 aa).

The interval 31–52 (HSKTTSPATDAGHVQETSEPSL) is disordered. Phosphoserine is present on Ser-36. The interval 82-162 (TPDADLDVTN…HTHSSVKNVP (81 aa)) is interaction with PRKN. The segment at 162–225 (PENLLKCFGE…FLFSLFGQKH (64 aa)) is interaction with TP53. The GST C-terminal domain occupies 220–317 (LFGQKHSAVN…NLVPFSTALQ (98 aa)).

In terms of assembly, part of the multisynthetase complex (MSC), a multisubunit complex that groups tRNA ligases for Arg (RARS1), Asp (DARS1), Gln (QARS1), Ile (IARS1), Leu (LARS1), Lys (KARS1), Met (MARS1) the bifunctional ligase for Glu and Pro (EPRS1) and the auxiliary subunits AIMP1/p43, AIMP2/p38 and EEF1E1/p18. Interacts (via N-terminus) with KARS1. Interacts with EPRS1. Forms a linear complex that contains MARS1, EEF1E1, EPRS1 and AIMP2 that is at the core of the multisubunit complex. Binds FUBP1 (via C-terminus). Interacts in both its unphosphorylated and phosphorylated forms with p53/TP53 (via N-terminus) in the nucleus following UV irradiation. Interacts (via N-terminus) with PRKN/parkin (via first RING-type domain). Interacts with TARS3. Phosphorylated on serine residues in response to UV irradiation. In terms of processing, ubiquitinated by PRKN, leading to its degradation by the proteasome.

Its subcellular location is the cytoplasm. The protein localises to the cytosol. It localises to the nucleus. Functionally, required for assembly and stability of the aminoacyl-tRNA synthase complex. Mediates ubiquitination and degradation of FUBP1, a transcriptional activator of MYC, leading to MYC down-regulation which is required for aveolar type II cell differentiation. Blocks MDM2-mediated ubiquitination and degradation of p53/TP53. Functions as a proapoptotic factor. The protein is Aminoacyl tRNA synthase complex-interacting multifunctional protein 2 (AIMP2) of Cricetulus griseus (Chinese hamster).